Consider the following 96-residue polypeptide: Small ribosomal subunit protein uS19 (96 aa).

This sequence belongs to the universal ribosomal protein uS19 family.

Functionally, protein S19 forms a complex with S13 that binds strongly to the 16S ribosomal RNA. The sequence is that of Small ribosomal subunit protein uS19 from Koribacter versatilis (strain Ellin345).